The following is a 138-amino-acid chain: ATP synthase epsilon chain (138 aa).

This sequence belongs to the ATPase epsilon chain family. In terms of assembly, F-type ATPases have 2 components, CF(1) - the catalytic core - and CF(0) - the membrane proton channel. CF(1) has five subunits: alpha(3), beta(3), gamma(1), delta(1), epsilon(1). CF(0) has three main subunits: a, b and c.

Its subcellular location is the cell inner membrane. Functionally, produces ATP from ADP in the presence of a proton gradient across the membrane. The sequence is that of ATP synthase epsilon chain from Vesicomyosocius okutanii subsp. Calyptogena okutanii (strain HA).